The following is a 112-amino-acid chain: Colipase (112 aa).

The first 17 residues, 1 to 17 (MEKILVLLLVALAVVYA), serve as a signal peptide directing secretion. The propeptide at 18 to 22 (VPDPR) is enterostatin, activation peptide. 5 cysteine pairs are disulfide-bonded: cysteine 34–cysteine 45, cysteine 40–cysteine 56, cysteine 44–cysteine 78, cysteine 66–cysteine 86, and cysteine 80–cysteine 104.

Belongs to the colipase family. As to quaternary structure, forms a 1:1 stoichiometric complex with pancreatic lipase. As to expression, expressed by the pancreas.

It localises to the secreted. Its function is as follows. Colipase is a cofactor of pancreatic lipase. It allows the lipase to anchor itself to the lipid-water interface. Without colipase the enzyme is washed off by bile salts, which have an inhibitory effect on the lipase. In terms of biological role, enterostatin has a biological activity as a satiety signal. The chain is Colipase (CLPS) from Canis lupus familiaris (Dog).